Here is a 122-residue protein sequence, read N- to C-terminus: Small ribosomal subunit protein uS13 (122 aa).

The disordered stretch occupies residues 95–122; the sequence is GLPVRGQRTKTNARTRKGPKKTIAGKKK.

The protein belongs to the universal ribosomal protein uS13 family. In terms of assembly, part of the 30S ribosomal subunit. Forms a loose heterodimer with protein S19. Forms two bridges to the 50S subunit in the 70S ribosome.

Its function is as follows. Located at the top of the head of the 30S subunit, it contacts several helices of the 16S rRNA. In the 70S ribosome it contacts the 23S rRNA (bridge B1a) and protein L5 of the 50S subunit (bridge B1b), connecting the 2 subunits; these bridges are implicated in subunit movement. Contacts the tRNAs in the A and P-sites. This is Small ribosomal subunit protein uS13 from Corynebacterium diphtheriae (strain ATCC 700971 / NCTC 13129 / Biotype gravis).